A 305-amino-acid chain; its full sequence is MIKQRTLKQSIKVTGVGLHSGEKVTLTLRPAMPNTGVVYYRTDLNPTVAFPADPNSVRDTMLCTALINEQGVRISTVEHLNAALAGLGIDNIIIEVDAPEIPIMDGSASPFIYLLLDAGIEEQNAAKKFIRIKEYVRVEDGDKWAEFKPYNGFRLDFTIDFDHPAIGKDVRNYEMNFSAQAFVHQISRARTFGFMKDIEYLQSQGLVLGGSLDNAIVLDDYRILNEDGLRFKDELVRHKMLDAIGDLYMAGYNIIGDFKAYKSGHGLNNKLLRAVLANQEAWEFVTFEDKEQVPQGYVAPVQVLI.

His79, His238, and Asp242 together coordinate Zn(2+). Catalysis depends on His265, which acts as the Proton donor.

Belongs to the LpxC family. It depends on Zn(2+) as a cofactor.

It carries out the reaction a UDP-3-O-[(3R)-3-hydroxyacyl]-N-acetyl-alpha-D-glucosamine + H2O = a UDP-3-O-[(3R)-3-hydroxyacyl]-alpha-D-glucosamine + acetate. The protein operates within glycolipid biosynthesis; lipid IV(A) biosynthesis; lipid IV(A) from (3R)-3-hydroxytetradecanoyl-[acyl-carrier-protein] and UDP-N-acetyl-alpha-D-glucosamine: step 2/6. Its function is as follows. Catalyzes the hydrolysis of UDP-3-O-myristoyl-N-acetylglucosamine to form UDP-3-O-myristoylglucosamine and acetate, the committed step in lipid A biosynthesis. This chain is UDP-3-O-acyl-N-acetylglucosamine deacetylase, found in Haemophilus influenzae (strain PittGG).